Consider the following 239-residue polypeptide: Phosphoribosylaminoimidazole-succinocarboxamide synthase (239 aa).

The protein belongs to the SAICAR synthetase family.

It catalyses the reaction 5-amino-1-(5-phospho-D-ribosyl)imidazole-4-carboxylate + L-aspartate + ATP = (2S)-2-[5-amino-1-(5-phospho-beta-D-ribosyl)imidazole-4-carboxamido]succinate + ADP + phosphate + 2 H(+). Its pathway is purine metabolism; IMP biosynthesis via de novo pathway; 5-amino-1-(5-phospho-D-ribosyl)imidazole-4-carboxamide from 5-amino-1-(5-phospho-D-ribosyl)imidazole-4-carboxylate: step 1/2. The chain is Phosphoribosylaminoimidazole-succinocarboxamide synthase from Bacillus cereus (strain AH187).